Reading from the N-terminus, the 450-residue chain is MAAVSHLAKLGLFDARVPRYTSYPTAPNFGVGVTENLHADWISSIPAGGSISLYLHVPFCRRLCWFCACRTQGTSSDAPVRAYAAALKSELALLRARLAPGVRLARMHWGGGTPTLLPPTLIHELALAIRDAVPSDAETDFSVEIDPTEIDAARLDALFEAGMTRVSIGVQDFDPLIQQSIGREQSFELTQRLTEDLRHRGLMGLDADILYGLPHQTAPGVADSVQKLLSLSPDRVAVLGYAHVPAVSRRQLMIPTASIPGPEERLDLFETARTLILWDGYQQVGLDHFARAGDPLAHAHACGRLCRSFQGYTDDRAEVLIGLGASAISRFPQGFTQNAPSTSDHLRAIRSGRFSTARGHVLSDEDRLRGRMIEQLLCEFRISRAQILARFAVAPERLETLFRTCAAAFPGVVEITGHGLEILEEGRPLARIVARSFDRYDASGKPQGAI.

Residues 45-282 (IPAGGSISLY…RTLILWDGYQ (238 aa)) enclose the Radical SAM core domain. Tyr-54 is a binding site for S-adenosyl-L-methionine. Residues Cys-60 and Cys-64 each contribute to the [4Fe-4S] cluster site. An S-adenosyl-L-methionine-binding site is contributed by Phe-66. Cys-67 contributes to the [4Fe-4S] cluster binding site. S-adenosyl-L-methionine contacts are provided by residues Gly-111, 112–113 (GT), Glu-144, Gln-171, Arg-183, Asp-208, Ala-242, and Ile-328.

The protein belongs to the anaerobic coproporphyrinogen-III oxidase family. Monomer. [4Fe-4S] cluster serves as cofactor.

It localises to the cytoplasm. The catalysed reaction is coproporphyrinogen III + 2 S-adenosyl-L-methionine = protoporphyrinogen IX + 2 5'-deoxyadenosine + 2 L-methionine + 2 CO2. It functions in the pathway porphyrin-containing compound metabolism; protoporphyrin-IX biosynthesis; protoporphyrinogen-IX from coproporphyrinogen-III (AdoMet route): step 1/1. In terms of biological role, involved in the heme and chlorophyll biosynthesis. Catalyzes the anaerobic oxidative decarboxylation of propionate groups of rings A and B of coproporphyrinogen III to yield the vinyl groups in protoporphyrinogen IX. The protein is Oxygen-independent coproporphyrinogen III oxidase (hemZ) of Cereibacter sphaeroides (strain ATCC 17023 / DSM 158 / JCM 6121 / CCUG 31486 / LMG 2827 / NBRC 12203 / NCIMB 8253 / ATH 2.4.1.) (Rhodobacter sphaeroides).